Consider the following 235-residue polypeptide: UPF0758 protein COPRO5265_1522 (235 aa).

One can recognise an MPN domain in the interval 109-235 (RITTPEDAIE…HVSLAREKLI (127 aa)). Residues histidine 184, histidine 186, and aspartate 197 each coordinate Zn(2+). The JAMM motif motif lies at 184–197 (HNHPSGDPSPSRED).

The protein belongs to the UPF0758 family.

The sequence is that of UPF0758 protein COPRO5265_1522 from Coprothermobacter proteolyticus (strain ATCC 35245 / DSM 5265 / OCM 4 / BT).